Consider the following 141-residue polypeptide: Nucleoside diphosphate kinase (141 aa).

ATP contacts are provided by Lys-11, Phe-59, Arg-87, Thr-93, Arg-104, and Asn-114. His-117 acts as the Pros-phosphohistidine intermediate in catalysis.

This sequence belongs to the NDK family. In terms of assembly, homotetramer. It depends on Mg(2+) as a cofactor.

It is found in the cytoplasm. It catalyses the reaction a 2'-deoxyribonucleoside 5'-diphosphate + ATP = a 2'-deoxyribonucleoside 5'-triphosphate + ADP. The catalysed reaction is a ribonucleoside 5'-diphosphate + ATP = a ribonucleoside 5'-triphosphate + ADP. Its function is as follows. Major role in the synthesis of nucleoside triphosphates other than ATP. The ATP gamma phosphate is transferred to the NDP beta phosphate via a ping-pong mechanism, using a phosphorylated active-site intermediate. The polypeptide is Nucleoside diphosphate kinase (Pseudomonas putida (strain GB-1)).